We begin with the raw amino-acid sequence, 320 residues long: Beta-carotene 3-hydroxylase, chloroplastic (320 aa).

Residues 1-78 (METQFLVSGR…EKELRGKLVV (78 aa)) constitute a chloroplast transit peptide. Transmembrane regions (helical) follow at residues 118 to 138 (YLVA…LSVY) and 152 to 172 (LSEM…MEFW). One can recognise a Fatty acid hydroxylase domain in the interval 165 to 292 (AAVGMEFWAR…KFNGVPYGLF (128 aa)). The short motif at 177-182 (HEALWH) is the Histidine box-1 element. Residues 189–193 (HESHH) carry the Histidine box-2 motif. The next 2 membrane-spanning stretches (helical) occupy residues 204–224 (DIFA…GFFH) and 228–248 (IPGL…AYMF). The Histidine box-3 signature appears at 250–255 (HDGLVH). The Histidine box-4 motif lies at 276–280 (HTLHH).

This sequence belongs to the sterol desaturase family.

It is found in the plastid. Its subcellular location is the chloroplast membrane. It catalyses the reaction all-trans-beta-carotene + 4 reduced [2Fe-2S]-[ferredoxin] + 2 O2 + 4 H(+) = all-trans-zeaxanthin + 4 oxidized [2Fe-2S]-[ferredoxin] + 2 H2O. Nonheme diiron monooxygenase involved in the biosynthesis of xanthophylls. Specific for beta-ring hydroxylations of beta-carotene. Uses ferredoxin as an electron donor. This is Beta-carotene 3-hydroxylase, chloroplastic (BHY) from Gentiana lutea (Yellow gentian).